We begin with the raw amino-acid sequence, 174 residues long: Crossover junction endodeoxyribonuclease RuvC (174 aa).

Catalysis depends on residues Asp8, Glu67, and Asp139. Mg(2+) is bound by residues Asp8, Glu67, and Asp139.

Belongs to the RuvC family. In terms of assembly, homodimer which binds Holliday junction (HJ) DNA. The HJ becomes 2-fold symmetrical on binding to RuvC with unstacked arms; it has a different conformation from HJ DNA in complex with RuvA. In the full resolvosome a probable DNA-RuvA(4)-RuvB(12)-RuvC(2) complex forms which resolves the HJ. Mg(2+) is required as a cofactor.

It localises to the cytoplasm. It catalyses the reaction Endonucleolytic cleavage at a junction such as a reciprocal single-stranded crossover between two homologous DNA duplexes (Holliday junction).. The RuvA-RuvB-RuvC complex processes Holliday junction (HJ) DNA during genetic recombination and DNA repair. Endonuclease that resolves HJ intermediates. Cleaves cruciform DNA by making single-stranded nicks across the HJ at symmetrical positions within the homologous arms, yielding a 5'-phosphate and a 3'-hydroxyl group; requires a central core of homology in the junction. The consensus cleavage sequence is 5'-(A/T)TT(C/G)-3'. Cleavage occurs on the 3'-side of the TT dinucleotide at the point of strand exchange. HJ branch migration catalyzed by RuvA-RuvB allows RuvC to scan DNA until it finds its consensus sequence, where it cleaves and resolves the cruciform DNA. The sequence is that of Crossover junction endodeoxyribonuclease RuvC from Pseudomonas putida (strain W619).